Reading from the N-terminus, the 206-residue chain is 2,3-bisphosphoglycerate-dependent phosphoglycerate mutase (206 aa).

Residues 9 to 16 (RHGQSEWN), 22 to 23 (TG), R61, 88 to 91 (ERDY), K99, 115 to 116 (RR), and 159 to 160 (GN) each bind substrate. Catalysis depends on H10, which acts as the Tele-phosphohistidine intermediate. E88 serves as the catalytic Proton donor/acceptor.

Belongs to the phosphoglycerate mutase family. BPG-dependent PGAM subfamily. As to quaternary structure, homodimer.

The catalysed reaction is (2R)-2-phosphoglycerate = (2R)-3-phosphoglycerate. It participates in carbohydrate degradation; glycolysis; pyruvate from D-glyceraldehyde 3-phosphate: step 3/5. Functionally, catalyzes the interconversion of 2-phosphoglycerate and 3-phosphoglycerate. In Azorhizobium caulinodans (strain ATCC 43989 / DSM 5975 / JCM 20966 / LMG 6465 / NBRC 14845 / NCIMB 13405 / ORS 571), this protein is 2,3-bisphosphoglycerate-dependent phosphoglycerate mutase.